The following is a 194-amino-acid chain: Holliday junction branch migration complex subunit RuvA (194 aa).

The tract at residues 1–64 (MIGRLRGVLT…DDSAALYGFL (64 aa)) is domain I. A domain II region spans residues 65-140 (SESERRLFRH…RAADFNNGIS (76 aa)). Residues 140–144 (STSGK) are flexible linker. The tract at residues 145 to 194 (LNLDTVSEAALALQQLGYKPAEAARMARDAGTESDDVASVIKKALQAALR) is domain III.

It belongs to the RuvA family. In terms of assembly, homotetramer. Forms an RuvA(8)-RuvB(12)-Holliday junction (HJ) complex. HJ DNA is sandwiched between 2 RuvA tetramers; dsDNA enters through RuvA and exits via RuvB. An RuvB hexamer assembles on each DNA strand where it exits the tetramer. Each RuvB hexamer is contacted by two RuvA subunits (via domain III) on 2 adjacent RuvB subunits; this complex drives branch migration. In the full resolvosome a probable DNA-RuvA(4)-RuvB(12)-RuvC(2) complex forms which resolves the HJ.

It localises to the cytoplasm. Functionally, the RuvA-RuvB-RuvC complex processes Holliday junction (HJ) DNA during genetic recombination and DNA repair, while the RuvA-RuvB complex plays an important role in the rescue of blocked DNA replication forks via replication fork reversal (RFR). RuvA specifically binds to HJ cruciform DNA, conferring on it an open structure. The RuvB hexamer acts as an ATP-dependent pump, pulling dsDNA into and through the RuvAB complex. HJ branch migration allows RuvC to scan DNA until it finds its consensus sequence, where it cleaves and resolves the cruciform DNA. The sequence is that of Holliday junction branch migration complex subunit RuvA from Xylella fastidiosa (strain 9a5c).